The following is a 332-amino-acid chain: tRNA dimethylallyltransferase 2 (332 aa).

An ATP-binding site is contributed by 15–22 (GPTASGKT). 17-22 (TASGKT) provides a ligand contact to substrate. 2 interaction with substrate tRNA regions span residues 40–43 (DSVM) and 164–168 (QRIQR).

The protein belongs to the IPP transferase family. As to quaternary structure, monomer. The cofactor is Mg(2+).

The enzyme catalyses adenosine(37) in tRNA + dimethylallyl diphosphate = N(6)-dimethylallyladenosine(37) in tRNA + diphosphate. In terms of biological role, catalyzes the transfer of a dimethylallyl group onto the adenine at position 37 in tRNAs that read codons beginning with uridine, leading to the formation of N6-(dimethylallyl)adenosine (i(6)A). The protein is tRNA dimethylallyltransferase 2 of Hahella chejuensis (strain KCTC 2396).